A 358-amino-acid chain; its full sequence is PDZ and LIM domain protein 3 (358 aa).

Positions 1 to 84 constitute a PDZ domain; the sequence is MPQNVLLPGP…QLCLKIDRAE (84 aa). Disordered stretches follow at residues 126–155 and 237–274; these read FILPGRSSGSSTPSGFDPGSGRSTPSSVST and DTEHPSKPRQSGSFKILQDMVDDDPDRPSGTRSVRAPV. A compositionally biased stretch (low complexity) spans 129-146; that stretch reads PGRSSGSSTPSGFDPGSG. Positions 288-347 constitute an LIM zinc-binding domain; that stretch reads PICDRCGNGIVGTVVKAKDKLRHPDCFVCSDCNLNLKQKGYFFVEGQLYCEAHARARMRP.

It is found in the cytoplasm. The protein localises to the myofibril. The protein resides in the sarcomere. It localises to the z line. Its function is as follows. May play a role in the organization of actin filament arrays within muscle cells. The chain is PDZ and LIM domain protein 3 (pdlim3) from Xenopus laevis (African clawed frog).